Reading from the N-terminus, the 168-residue chain is uncharacterized protein (168 aa).

The helical transmembrane segment at 36-56 threads the bilayer; that stretch reads LNWWQLIVVVGIAISGIAAIA. N-linked (GlcNAc...) asparagine; by host glycosylation is present at asparagine 74. 3 helical membrane-spanning segments follow: residues 86–106, 115–135, and 143–163; these read FIII…LAWL, KLLT…ALTI, and MVKL…GFFI. Asparagine 164 carries an N-linked (GlcNAc...) asparagine; by host glycan.

The protein localises to the membrane. This is an uncharacterized protein from Acanthamoeba polyphaga mimivirus (APMV).